The following is a 73-amino-acid chain: Gas vesicle protein M2 (73 aa).

It belongs to the gas vesicle GvpA family. GvpF to GvpM interact with each other in vitro, and may form multi-subunit complex(es). Might interact with GvpA.

The protein resides in the gas vesicle. Its function is as follows. Proteins GvpF to GvpM might be involved in nucleating gas vesicle formation. A minor component of the gas vesicle. Gas vesicles are hollow, gas filled proteinaceous nanostructures found in several microbial planktonic microorganisms. They allow positioning of halobacteria at the optimal depth for growth in the poorly aerated, shallow brine pools of their habitat. Expression of 2 c-vac DNA fragments containing 2 divergently transcribed regions (gvpE-gvpF-gvpG-gvpH-gvpI-gvpJ-gvpK-gvpL-gvpM and gvpA-gvpC-gvpN-gvpO) allows H.volcanii to produce gas vesicles. The chain is Gas vesicle protein M2 from Halobacterium salinarum (strain ATCC 700922 / JCM 11081 / NRC-1) (Halobacterium halobium).